Consider the following 174-residue polypeptide: Adenine phosphoribosyltransferase (174 aa).

The protein belongs to the purine/pyrimidine phosphoribosyltransferase family. As to quaternary structure, homodimer.

It localises to the cytoplasm. The enzyme catalyses AMP + diphosphate = 5-phospho-alpha-D-ribose 1-diphosphate + adenine. Its pathway is purine metabolism; AMP biosynthesis via salvage pathway; AMP from adenine: step 1/1. Functionally, catalyzes a salvage reaction resulting in the formation of AMP, that is energically less costly than de novo synthesis. The chain is Adenine phosphoribosyltransferase from Lachnoclostridium phytofermentans (strain ATCC 700394 / DSM 18823 / ISDg) (Clostridium phytofermentans).